The sequence spans 248 residues: Ubiquinone/menaquinone biosynthesis C-methyltransferase UbiE (248 aa).

S-adenosyl-L-methionine-binding positions include serine 68, aspartate 92, and 120-121 (NA).

It belongs to the class I-like SAM-binding methyltransferase superfamily. MenG/UbiE family.

The catalysed reaction is a 2-demethylmenaquinol + S-adenosyl-L-methionine = a menaquinol + S-adenosyl-L-homocysteine + H(+). It carries out the reaction a 2-methoxy-6-(all-trans-polyprenyl)benzene-1,4-diol + S-adenosyl-L-methionine = a 5-methoxy-2-methyl-3-(all-trans-polyprenyl)benzene-1,4-diol + S-adenosyl-L-homocysteine + H(+). It participates in quinol/quinone metabolism; menaquinone biosynthesis; menaquinol from 1,4-dihydroxy-2-naphthoate: step 2/2. It functions in the pathway cofactor biosynthesis; ubiquinone biosynthesis. Methyltransferase required for the conversion of demethylmenaquinol (DMKH2) to menaquinol (MKH2) and the conversion of 2-polyprenyl-6-methoxy-1,4-benzoquinol (DDMQH2) to 2-polyprenyl-3-methyl-6-methoxy-1,4-benzoquinol (DMQH2). The chain is Ubiquinone/menaquinone biosynthesis C-methyltransferase UbiE from Rickettsia typhi (strain ATCC VR-144 / Wilmington).